Consider the following 236-residue polypeptide: Phosphoribosylaminoimidazole-succinocarboxamide synthase (236 aa).

It belongs to the SAICAR synthetase family.

The enzyme catalyses 5-amino-1-(5-phospho-D-ribosyl)imidazole-4-carboxylate + L-aspartate + ATP = (2S)-2-[5-amino-1-(5-phospho-beta-D-ribosyl)imidazole-4-carboxamido]succinate + ADP + phosphate + 2 H(+). Its pathway is purine metabolism; IMP biosynthesis via de novo pathway; 5-amino-1-(5-phospho-D-ribosyl)imidazole-4-carboxamide from 5-amino-1-(5-phospho-D-ribosyl)imidazole-4-carboxylate: step 1/2. In Pelodictyon phaeoclathratiforme (strain DSM 5477 / BU-1), this protein is Phosphoribosylaminoimidazole-succinocarboxamide synthase.